Here is a 135-residue protein sequence, read N- to C-terminus: S-adenosylmethionine decarboxylase proenzyme (135 aa).

Ser-63 acts as the Schiff-base intermediate with substrate; via pyruvic acid in catalysis. Ser-63 carries the post-translational modification Pyruvic acid (Ser); by autocatalysis. The Proton acceptor; for processing activity role is filled by His-68. The active-site Proton donor; for catalytic activity is the Cys-83.

The protein belongs to the prokaryotic AdoMetDC family. Type 1 subfamily. As to quaternary structure, heterotetramer of two alpha and two beta chains arranged as a dimer of alpha/beta heterodimers. It depends on pyruvate as a cofactor. Is synthesized initially as an inactive proenzyme. Formation of the active enzyme involves a self-maturation process in which the active site pyruvoyl group is generated from an internal serine residue via an autocatalytic post-translational modification. Two non-identical subunits are generated from the proenzyme in this reaction, and the pyruvate is formed at the N-terminus of the alpha chain, which is derived from the carboxyl end of the proenzyme. The post-translation cleavage follows an unusual pathway, termed non-hydrolytic serinolysis, in which the side chain hydroxyl group of the serine supplies its oxygen atom to form the C-terminus of the beta chain, while the remainder of the serine residue undergoes an oxidative deamination to produce ammonia and the pyruvoyl group blocking the N-terminus of the alpha chain.

The catalysed reaction is S-adenosyl-L-methionine + H(+) = S-adenosyl 3-(methylsulfanyl)propylamine + CO2. It functions in the pathway amine and polyamine biosynthesis; S-adenosylmethioninamine biosynthesis; S-adenosylmethioninamine from S-adenosyl-L-methionine: step 1/1. Functionally, catalyzes the decarboxylation of S-adenosylmethionine to S-adenosylmethioninamine (dcAdoMet), the propylamine donor required for the synthesis of the polyamines spermine and spermidine from the diamine putrescine. The protein is S-adenosylmethionine decarboxylase proenzyme of Thermodesulfovibrio yellowstonii (strain ATCC 51303 / DSM 11347 / YP87).